A 78-amino-acid chain; its full sequence is MASLIQVRDLLALQGRMEAMQISRTLHTPQPMIDAMLNQLENMGRAVRIQEDPDGCLSGSCKSCPEGKACLREWWTLR.

The iron-sulfur cluster site is built by Cys-56, Cys-61, Cys-64, and Cys-70.

The protein belongs to the FeoC family.

Functionally, may function as a transcriptional regulator that controls feoABC expression. The sequence is that of Probable [Fe-S]-dependent transcriptional repressor from Citrobacter koseri (strain ATCC BAA-895 / CDC 4225-83 / SGSC4696).